The chain runs to 175 residues: Adenine phosphoribosyltransferase (175 aa).

Belongs to the purine/pyrimidine phosphoribosyltransferase family. In terms of assembly, homodimer.

The protein localises to the cytoplasm. It catalyses the reaction AMP + diphosphate = 5-phospho-alpha-D-ribose 1-diphosphate + adenine. It functions in the pathway purine metabolism; AMP biosynthesis via salvage pathway; AMP from adenine: step 1/1. Its function is as follows. Catalyzes a salvage reaction resulting in the formation of AMP, that is energically less costly than de novo synthesis. The sequence is that of Adenine phosphoribosyltransferase from Caldicellulosiruptor saccharolyticus (strain ATCC 43494 / DSM 8903 / Tp8T 6331).